We begin with the raw amino-acid sequence, 578 residues long: Frizzled and smoothened-like protein Q (578 aa).

An N-terminal signal peptide occupies residues 1 to 23 (MKNSFLINILIIYYLFIILFVNS). Residues 24–233 (QDLKLGGSCE…GKTKILDRTN (210 aa)) lie on the Extracellular side of the membrane. The FZ domain occupies 27–157 (KLGGSCELID…GAPMFPINST (131 aa)). Cystine bridges form between Cys-32-Cys-95, Cys-41-Cys-88, Cys-79-Cys-128, and Cys-121-Cys-141. 4 N-linked (GlcNAc...) asparagine glycosylation sites follow: Asn-46, Asn-64, Asn-99, and Asn-104. N-linked (GlcNAc...) asparagine glycans are attached at residues Asn-144, Asn-155, Asn-181, and Asn-233. The chain crosses the membrane as a helical span at residues 234-254 (YTLTSISFITCIFMILTFGVL). Residues 255-261 (PNKITHR) lie on the Cytoplasmic side of the membrane. A helical transmembrane segment spans residues 262–282 (MESILSFACGGCITALSLFIQ). At 283-305 (SRQDNFNCSSDPGRFKSQSDYLC) the chain is on the extracellular side. An N-linked (GlcNAc...) asparagine glycan is attached at Asn-289. The helical transmembrane segment at 306–326 (LLTGLIFQFGAITSIFWSPMI) threads the bilayer. At 327-341 (AYDFYITSTLGKIRK) the chain is on the cytoplasmic side. Residues 342 to 362 (FGLYRIVLWSFIFVLTALPAF) form a helical membrane-spanning segment. The Extracellular portion of the chain corresponds to 363–388 (GGKYSATVATNCWINSDDGSAWQYVS). A helical transmembrane segment spans residues 389 to 409 (FYIPSWCAMGLICLFSILSVI). Topologically, residues 410–422 (NVSKMYIQTPNNR) are cytoplasmic. A helical membrane pass occupies residues 423 to 443 (ILFFNIKILITLLLFLFVLTF). Over 444–490 (ASSLKFYMEERMDTYFDAIAVWVECIGKGDPSQCELHAPGYDLKALN) the chain is Extracellular. The chain crosses the membrane as a helical span at residues 491–511 (IVVIGILGFTVFIGYGLDPIV). The Cytoplasmic segment spans residues 512 to 578 (IHIWMESKKF…LKSTEINQQP (67 aa)). Over residues 544–556 (NNNNNETASTSSG) the composition is skewed to low complexity. Positions 544–578 (NNNNNETASTSSGNERKQTTVKMSNLKSTEINQQP) are disordered. Over residues 563–578 (TVKMSNLKSTEINQQP) the composition is skewed to polar residues.

It belongs to the G-protein coupled receptor Fz/Smo family.

The protein localises to the membrane. In Dictyostelium discoideum (Social amoeba), this protein is Frizzled and smoothened-like protein Q (fslQ).